We begin with the raw amino-acid sequence, 120 residues long: DNA-directed RNA polymerase II subunit rpb11 (120 aa).

This sequence belongs to the archaeal Rpo11/eukaryotic RPB11/RPC19 RNA polymerase subunit family. Component of the RNA polymerase II (Pol II) complex consisting of 12 subunits.

It localises to the nucleus. Functionally, DNA-dependent RNA polymerase catalyzes the transcription of DNA into RNA using the four ribonucleoside triphosphates as substrates. Component of RNA polymerase II which synthesizes mRNA precursors and many functional non-coding RNAs. Pol II is the central component of the basal RNA polymerase II transcription machinery. It is composed of mobile elements that move relative to each other. RPB11 is part of the core element with the central large cleft. The chain is DNA-directed RNA polymerase II subunit rpb11 (polr2j) from Dictyostelium discoideum (Social amoeba).